The sequence spans 297 residues: Diaminopimelate epimerase (297 aa).

Asn13, Gln46, and Asn66 together coordinate substrate. Cys76 (proton donor) is an active-site residue. Residues 77-78 (GN), Asn174, Asn207, and 225-226 (ER) each bind substrate. Cys234 functions as the Proton acceptor in the catalytic mechanism. Substrate is bound at residue 235–236 (GT).

Belongs to the diaminopimelate epimerase family. In terms of assembly, homodimer.

It is found in the cytoplasm. It catalyses the reaction (2S,6S)-2,6-diaminopimelate = meso-2,6-diaminopimelate. It participates in amino-acid biosynthesis; L-lysine biosynthesis via DAP pathway; DL-2,6-diaminopimelate from LL-2,6-diaminopimelate: step 1/1. Functionally, catalyzes the stereoinversion of LL-2,6-diaminopimelate (L,L-DAP) to meso-diaminopimelate (meso-DAP), a precursor of L-lysine and an essential component of the bacterial peptidoglycan. The chain is Diaminopimelate epimerase from Leptothrix cholodnii (strain ATCC 51168 / LMG 8142 / SP-6) (Leptothrix discophora (strain SP-6)).